A 790-amino-acid polypeptide reads, in one-letter code: Threonine--tRNA ligase 2, cytoplasmic (790 aa).

N-acetylalanine is present on Ala2. A coiled-coil region spans residues 13 to 68; it reads SRLQRQEEDIRWLCAEVQRLRDEQLRGPERGQAEGPRLTREVAQLQAENRDLHQRL. The segment at 80 to 117 is disordered; that stretch reads RTEAGRAAAHEPPTQNQEKDTKKKRLKQSEPGREVKQP. Residues 96–117 are compositionally biased toward basic and acidic residues; the sequence is QEKDTKKKRLKQSEPGREVKQP. A TGS domain is found at 148–210; that stretch reads NVISVRVAGG…EGDSTVELLM (63 aa). Position 441 is a phosphoserine (Ser441). The short motif at 774 to 780 is the Nuclear localization signal element; sequence KLKNLKK.

The protein belongs to the class-II aminoacyl-tRNA synthetase family. As to quaternary structure, may be a component of the multisynthetase complex (MSC), a large multi-subunit complex which contains at least eight different aminoacyl-tRNA synthetases plus three auxillary subunits AIMP1, AIMP2 and EEF1E1. Interacts with the MSC components EPRS1, AIMP1, AIMP2 and KARS1. In terms of tissue distribution, ubiquitous (at protein level). Strongly expressed in muscle (at protein level). Moderately expressed in heart and liver (at protein level). Weakly expressed in stomach, kidney, testis, spleen, brain, fat and lung (at protein level).

The protein localises to the cytoplasm. It localises to the nucleus. It catalyses the reaction tRNA(Thr) + L-threonine + ATP = L-threonyl-tRNA(Thr) + AMP + diphosphate + H(+). In terms of biological role, catalyzes the attachment of threonine to tRNA(Thr) in a two-step reaction: threonine is first activated by ATP to form Thr-AMP and then transferred to the acceptor end of tRNA(Thr). Also edits incorrectly charged tRNA(Thr) via its editing domain, at the post-transfer stage. This Mus musculus (Mouse) protein is Threonine--tRNA ligase 2, cytoplasmic (Tars3).